Reading from the N-terminus, the 251-residue chain is Hydroxyacylglutathione hydrolase (251 aa).

Zn(2+) is bound by residues His53, His55, Asp57, His58, His110, Asp127, and His165.

Belongs to the metallo-beta-lactamase superfamily. Glyoxalase II family. As to quaternary structure, monomer. It depends on Zn(2+) as a cofactor.

It catalyses the reaction an S-(2-hydroxyacyl)glutathione + H2O = a 2-hydroxy carboxylate + glutathione + H(+). Its pathway is secondary metabolite metabolism; methylglyoxal degradation; (R)-lactate from methylglyoxal: step 2/2. Functionally, thiolesterase that catalyzes the hydrolysis of S-D-lactoyl-glutathione to form glutathione and D-lactic acid. In Escherichia coli O9:H4 (strain HS), this protein is Hydroxyacylglutathione hydrolase.